We begin with the raw amino-acid sequence, 132 residues long: uncharacterized protein (132 aa).

Belongs to the mycobacterial PPE family.

This is an uncharacterized protein from Mycobacterium tuberculosis (strain ATCC 25618 / H37Rv).